The sequence spans 287 residues: Aspartate dehydrogenase domain-containing protein (287 aa).

2 positions are modified to phosphoserine: Ser24 and Ser172.

Belongs to the L-aspartate dehydrogenase family.

The sequence is that of Aspartate dehydrogenase domain-containing protein from Mus musculus (Mouse).